Reading from the N-terminus, the 243-residue chain is Segregation and condensation protein A (243 aa).

This sequence belongs to the ScpA family. As to quaternary structure, component of a cohesin-like complex composed of ScpA, ScpB and the Smc homodimer, in which ScpA and ScpB bind to the head domain of Smc. The presence of the three proteins is required for the association of the complex with DNA.

It is found in the cytoplasm. Participates in chromosomal partition during cell division. May act via the formation of a condensin-like complex containing Smc and ScpB that pull DNA away from mid-cell into both cell halves. This chain is Segregation and condensation protein A, found in Thermoanaerobacter pseudethanolicus (strain ATCC 33223 / 39E) (Clostridium thermohydrosulfuricum).